Reading from the N-terminus, the 265-residue chain is Mlc titration factor A (265 aa).

Zn(2+)-binding residues include H111, H148, H152, and E211.

The protein belongs to the MtfA family. In terms of assembly, interacts with Mlc. The cofactor is Zn(2+).

It is found in the cytoplasm. In terms of biological role, involved in the modulation of the activity of the glucose-phosphotransferase system (glucose-PTS). Interacts with the transcriptional repressor Mlc, preventing its interaction with DNA and leading to the modulation of expression of genes regulated by Mlc, including ptsG, which encodes the PTS system glucose-specific EIICB component. Shows zinc-dependent metallopeptidase activity. This is Mlc titration factor A from Escherichia coli O139:H28 (strain E24377A / ETEC).